We begin with the raw amino-acid sequence, 355 residues long: Acidic fibroblast growth factor intracellular-binding protein B (355 aa).

In terms of assembly, interacts with IER2.

Its subcellular location is the nucleus. The protein localises to the endomembrane system. In terms of biological role, mediates with IER2 FGF-signaling in Kupffer's vesicle ciliogenesis and in the establishment of laterality in the embryo. May be involved in mitogenic function of FGF1. The polypeptide is Acidic fibroblast growth factor intracellular-binding protein B (Danio rerio (Zebrafish)).